Reading from the N-terminus, the 238-residue chain is Ribonuclease PH (238 aa).

Phosphate contacts are provided by residues arginine 86 and 124 to 126 (GTR).

Belongs to the RNase PH family. As to quaternary structure, homohexameric ring arranged as a trimer of dimers.

The catalysed reaction is tRNA(n+1) + phosphate = tRNA(n) + a ribonucleoside 5'-diphosphate. Phosphorolytic 3'-5' exoribonuclease that plays an important role in tRNA 3'-end maturation. Removes nucleotide residues following the 3'-CCA terminus of tRNAs; can also add nucleotides to the ends of RNA molecules by using nucleoside diphosphates as substrates, but this may not be physiologically important. Probably plays a role in initiation of 16S rRNA degradation (leading to ribosome degradation) during starvation. In Psychrobacter cryohalolentis (strain ATCC BAA-1226 / DSM 17306 / VKM B-2378 / K5), this protein is Ribonuclease PH.